We begin with the raw amino-acid sequence, 619 residues long: Transcription factor 7-like 2 (619 aa).

Residues 1–11 (MPQLNGGGGDD) show a composition bias toward gly residues. The interval 1-53 (MPQLNGGGGDDLGANDELISFKDEGEQEEKSSENSSAERDLADVKSSLVNESE) is CTNNB1-binding. The disordered stretch occupies residues 1–96 (MPQLNGGGGD…AKRQDGGLFK (96 aa)). Over residues 19–43 (ISFKDEGEQEEKSSENSSAERDLAD) the composition is skewed to basic and acidic residues. A Glycyl lysine isopeptide (Lys-Gly) (interchain with G-Cter in SUMO2) cross-link involves residue Lys22. The segment covering 47-57 (SLVNESETNQN) has biased composition (polar residues). Residues 63–91 (EAERRPPPRSESFRDKSRESLEEAAKRQD) are compositionally biased toward basic and acidic residues. Thr201 and Thr212 each carry phosphothreonine; by NLK. Residues 201–395 (TPLITYSNEH…RRWHALSREE (195 aa)) form a mediates interaction with MAD2L2 region. Residues 318–328 (TVKQESSQSDV) are compositionally biased toward polar residues. Disordered regions lie at residues 318-350 (TVKQ…KPHI), 420-441 (RDNY…TNEH), 496-547 (CLSP…AHLS), and 574-619 (DLPP…KSLE). Lys320 participates in a covalent cross-link: Glycyl lysine isopeptide (Lys-Gly) (interchain with G-Cter in SUMO). Over residues 335–346 (KHQDSKKEEEKK) the composition is skewed to basic and acidic residues. Residues 350–418 (IKKPLNAFML…LHMQLYPGWS (69 aa)) constitute a DNA-binding region (HMG box). Positions 425–430 (KKKKRK) match the Nuclear localization signal motif. The interval 459–505 (SAPKKCRARFGLDQQNNWCGPCRRKKKCVRYIQGEGSCLSPPSSDGS) is promoter-specific activation domain. Residues 496-508 (CLSPPSSDGSLLD) are compositionally biased toward low complexity. Lys539 is covalently cross-linked (Glycyl lysine isopeptide (Lys-Gly) (interchain with G-Cter in SUMO2)). Positions 574-603 (DLPPAALQPAAPSSSIAQPSTSSLHSHSSL) are enriched in low complexity. Over residues 604 to 619 (AGTQPQPLSLVTKSLE) the composition is skewed to polar residues.

It belongs to the TCF/LEF family. In terms of assembly, interacts with TGFB1I1. Interacts with CTNNB1 (via the armadillo repeat); forms stable transcription complex. Interacts with EP300. Interacts with NLK. Interacts with CCDC85B (probably through the HMG box); prevents interaction with CTNNB1. Interacts with TNIK. Interacts with MAD2L2; prevents TCF7L2/TCF4 binding to promZIPK/DAPK3oters, negatively modulating its transcriptional activity. Interacts with ZIPK/DAPK3. Interacts with XIAP/BIRC4 and TLE3. Interacts with DDIT3/CHOP. The CTNNB1 and TCF7L2/TCF4 complex interacts with PML (isoform PML-4). Identified in a complex with CTNNB1 and FERMT2. Interacts with SPIN1. Interacts with C11orf84/SPINDOC in a SPIN1-dependent manner. Interacts with DAZAP2; the interaction results in localization of DAZAP2 to the nucleus. In vitro, phosphorylated by TNIK. In terms of processing, phosphorylated at Thr-201 and/or Thr-212 by NLK. Phosphorylation by NLK at these sites inhibits DNA-binding by TCF7L2/TCF4, thereby preventing transcriptional activation of target genes of the canonical Wnt/beta-catenin signaling pathway. Post-translationally, polysumoylated. Sumoylation is enhanced by PIAS family members and desumoylation is enhanced by SENP2. Sumoylation/desumoylation regulates TCF7L2/TCF4 transcription activity in the Wnt/beta-catenin signaling pathway without altering interaction with CTNNB1 nor binding to DNA. In terms of tissue distribution, detected in epithelium from small intestine, with the highest expression at the top of the crypts and a gradient of expression from crypt to villus. Detected in colon epithelium and colon cancer, and in epithelium from mammary gland and carcinomas derived therefrom.

The protein localises to the nucleus. Its subcellular location is the PML body. Functionally, participates in the Wnt signaling pathway and modulates MYC expression by binding to its promoter in a sequence-specific manner. Acts as a repressor in the absence of CTNNB1, and as activator in its presence. Activates transcription from promoters with several copies of the Tcf motif 5'-CCTTTGATC-3' in the presence of CTNNB1. TLE1, TLE2, TLE3 and TLE4 repress transactivation mediated by TCF7L2/TCF4 and CTNNB1. Expression of dominant-negative mutants results in cell-cycle arrest in G1. Necessary for the maintenance of the epithelial stem-cell compartment of the small intestine. In Homo sapiens (Human), this protein is Transcription factor 7-like 2 (TCF7L2).